The sequence spans 191 residues: Cell division protein SepF (191 aa).

Over residues 157 to 178 the composition is skewed to polar residues; the sequence is YLNESPAQPVQTTTSFGRTATP. The tract at residues 157–191 is disordered; sequence YLNESPAQPVQTTTSFGRTATPTPAWGTDSRYAAQ.

This sequence belongs to the SepF family. Homodimer. Interacts with FtsZ.

It localises to the cytoplasm. In terms of biological role, cell division protein that is part of the divisome complex and is recruited early to the Z-ring. Probably stimulates Z-ring formation, perhaps through the cross-linking of FtsZ protofilaments. Its function overlaps with FtsA. The chain is Cell division protein SepF from Synechococcus elongatus (strain ATCC 33912 / PCC 7942 / FACHB-805) (Anacystis nidulans R2).